A 22-amino-acid chain; its full sequence is Chymotrypsin inhibitor (22 aa).

The disordered stretch occupies residues 1–22 (FDESFGFQGPSTYEKTPLGEPA).

In terms of tissue distribution, hemolymph.

The protein localises to the secreted. It is found in the extracellular space. In terms of biological role, inhibits chymotrypsin stoichiometrically. Also inhibits porcine pancreatic elastase and trypsin. This Mythimna unipuncta (Armyworm moth) protein is Chymotrypsin inhibitor.